A 310-amino-acid polypeptide reads, in one-letter code: Alpha/beta hydrolase domain-containing protein 17A (310 aa).

Catalysis depends on charge relay system residues Ser190, Asp255, and His284. Ser307 carries the phosphoserine modification.

It belongs to the AB hydrolase superfamily. ABHD17 family. Post-translationally, palmitoylated on cysteine residues located in a cysteine cluster at the N-terminus which promotes membrane localization. Palmitoylation is required for post-synaptic localization and for depalmitoylating activity towards DLG4/PSD95.

The protein resides in the cell membrane. It is found in the endosome membrane. Its subcellular location is the cell projection. The protein localises to the dendritic spine. It localises to the postsynaptic density membrane. It catalyses the reaction S-hexadecanoyl-L-cysteinyl-[protein] + H2O = L-cysteinyl-[protein] + hexadecanoate + H(+). Inhibited by palmostatin-B. In terms of biological role, hydrolyzes fatty acids from S-acylated cysteine residues in proteins. Has depalmitoylating activity towards NRAS. Has depalmitoylating activity towards DLG4/PSD95. May have depalmitoylating activity towards MAP6. This Homo sapiens (Human) protein is Alpha/beta hydrolase domain-containing protein 17A.